The following is a 130-amino-acid chain: Leptin receptor gene-related protein (130 aa).

4 helical membrane-spanning segments follow: residues 7–27 (LVALSFSGALGLTFLLLGCAL), 32–52 (QYWPMFVLIFYILSPIPNLIA), 68–88 (LAYFLTTGIVVSAYGLPVVLA), and 99–119 (GLVMAGNCVIFLTILGFFLIF).

Belongs to the OB-RGRP/VPS55 family.

It localises to the golgi apparatus membrane. The protein resides in the endosome membrane. Involved in protein trafficking. May be involved in the down-regulation of membrane protein levels. The sequence is that of Leptin receptor gene-related protein (leprot) from Danio rerio (Zebrafish).